Reading from the N-terminus, the 367-residue chain is MRKYAKYLPFCLVVPFLAACSSKSTTSAKGKKIKSPFNYLSKDTNGLDILTGQFSHNIDDIWGSNELLVASKKDYVKYTDKYYTRSHISFEDGLITIETLGNQNHLRNSIIHTLLMGADPRGIDLFNSGDTPISKKPFLARQVKDQFGRDIINVAIANDFASHLLQRQLKTRRLQNGRTVTYVTIKMVADHVEVRARKYLPLVRKMAKRYGIETSLIFGIMEVESSFNPYAVSYANAIGLMQVVPRTAGRDIFVRKGMSGQPDRAYLHEPANNIDAGTLYLAILRNEYLDGINDPVSKRYAIISAYNSGAGAVLKVFDADRTSAFNRINQLSSDAVYRVLATAHPSKQARNYLNKVSKARQKYINIR.

The signal sequence occupies residues 1 to 19; that stretch reads MRKYAKYLPFCLVVPFLAA. Cysteine 20 is lipidated: N-palmitoyl cysteine. A lipid anchor (S-diacylglycerol cysteine) is attached at cysteine 20.

This sequence belongs to the transglycosylase Slt family.

Its subcellular location is the cell outer membrane. It carries out the reaction Exolytic cleavage of the (1-&gt;4)-beta-glycosidic linkage between N-acetylmuramic acid (MurNAc) and N-acetylglucosamine (GlcNAc) residues in peptidoglycan, from either the reducing or the non-reducing ends of the peptidoglycan chains, with concomitant formation of a 1,6-anhydrobond in the MurNAc residue.. Its function is as follows. Murein-degrading enzyme. May play a role in recycling of muropeptides during cell elongation and/or cell division. The protein is Membrane-bound lytic murein transglycosylase C of Haemophilus ducreyi (strain 35000HP / ATCC 700724).